The sequence spans 798 residues: Cation channel sperm-associated auxiliary subunit delta (798 aa).

The signal sequence occupies residues 1–20 (MLMLMLVAAVTMWLRPLVTA). Over 21–723 (QLCRSRTVRT…AFPVQLVSAG (703 aa)) the chain is Extracellular. Cystine bridges form between cysteine 23-cysteine 369, cysteine 59-cysteine 145, cysteine 144-cysteine 152, cysteine 387-cysteine 496, cysteine 510-cysteine 701, cysteine 525-cysteine 572, and cysteine 624-cysteine 652. N-linked (GlcNAc...) asparagine glycosylation is present at asparagine 123. Asparagine 230, asparagine 240, asparagine 472, asparagine 538, and asparagine 630 each carry an N-linked (GlcNAc...) asparagine glycan. A helical transmembrane segment spans residues 724–745 (VVILLIISSILGSVWLAYKTPK). Topologically, residues 746-798 (LLRTARGRRIKKCATQLCRRCKTVCQFRASATARAGTEPPGRHRTPHGGRSDH) are cytoplasmic.

This sequence belongs to the CATSPERD family. In terms of assembly, component of the CatSper complex or CatSpermasome composed of the core pore-forming members CATSPER1, CATSPER2, CATSPER3 and CATSPER4 as well as auxiliary members CATSPERB, CATSPERG, CATSPERD, CATSPERE, CATSPERZ, C2CD6/CATSPERT, TMEM249, TMEM262 and EFCAB9. HSPA1 may be an additional auxiliary complex member. The core complex members CATSPER1, CATSPER2, CATSPER3 and CATSPER4 form a heterotetrameric channel. The auxiliary CATSPERB, CATSPERG, CATSPERD and CATSPERE subunits form a pavilion-like structure over the pore which stabilizes the complex through interactions with CATSPER4, CATSPER3, CATSPER1 and CATSPER2 respectively. TMEM262/CATSPERH interacts with CATSPERB, further stabilizing the complex. C2CD6/CATSPERT interacts at least with CATSPERD and is required for targeting the CatSper complex in the flagellar membrane.

Its subcellular location is the cell projection. The protein resides in the cilium. It localises to the flagellum membrane. Functionally, auxiliary component of the CatSper complex, a complex involved in sperm cell hyperactivation. Sperm cell hyperactivation is needed for sperm motility which is essential late in the preparation of sperm for fertilization. Required for CATSPER1 stability before intraflagellar transport and/or incorporation of the CatSper complex channel into the flagellar membrane. The sequence is that of Cation channel sperm-associated auxiliary subunit delta from Homo sapiens (Human).